The following is a 201-amino-acid chain: Large ribosomal subunit protein bL25 (201 aa).

It belongs to the bacterial ribosomal protein bL25 family. CTC subfamily. As to quaternary structure, part of the 50S ribosomal subunit; part of the 5S rRNA/L5/L18/L25 subcomplex. Contacts the 5S rRNA. Binds to the 5S rRNA independently of L5 and L18.

This is one of the proteins that binds to the 5S RNA in the ribosome where it forms part of the central protuberance. This Chlorobaculum parvum (strain DSM 263 / NCIMB 8327) (Chlorobium vibrioforme subsp. thiosulfatophilum) protein is Large ribosomal subunit protein bL25.